A 377-amino-acid polypeptide reads, in one-letter code: UPF0754 membrane protein RBAM_010020 (377 aa).

The next 2 helical transmembrane spans lie at 1–21 (MGIAGTFLFMIVIGAAIGAVT) and 357–377 (YLGGLLGGIIGAIQALFVILF).

This sequence belongs to the UPF0754 family.

It localises to the cell membrane. This is UPF0754 membrane protein RBAM_010020 from Bacillus velezensis (strain DSM 23117 / BGSC 10A6 / LMG 26770 / FZB42) (Bacillus amyloliquefaciens subsp. plantarum).